A 38-amino-acid polypeptide reads, in one-letter code: Conotoxin r7a (38 aa).

The propeptide occupies 1–5 (APAKR). Tryptophan 6 bears the 6'-bromotryptophan mark. 4-carboxyglutamate occurs at positions 10 and 11. 3 cysteine pairs are disulfide-bonded: cysteine 12-cysteine 26, cysteine 19-cysteine 30, and cysteine 25-cysteine 35. Tryptophan 15 carries the 6'-bromotryptophan modification. 4-carboxyglutamate occurs at positions 20 and 31. Tryptophan 38 bears the 6'-bromotryptophan mark.

This sequence belongs to the conotoxin O2 superfamily. In terms of tissue distribution, expressed by the venom duct.

It is found in the secreted. Its function is as follows. Induces a sleep-like state in mice. This chain is Conotoxin r7a, found in Conus radiatus (Rayed cone).